The following is a 254-amino-acid chain: 3-deoxy-manno-octulosonate cytidylyltransferase (254 aa).

Belongs to the KdsB family.

It is found in the cytoplasm. It carries out the reaction 3-deoxy-alpha-D-manno-oct-2-ulosonate + CTP = CMP-3-deoxy-beta-D-manno-octulosonate + diphosphate. Its pathway is nucleotide-sugar biosynthesis; CMP-3-deoxy-D-manno-octulosonate biosynthesis; CMP-3-deoxy-D-manno-octulosonate from 3-deoxy-D-manno-octulosonate and CTP: step 1/1. It functions in the pathway bacterial outer membrane biogenesis; lipopolysaccharide biosynthesis. Activates KDO (a required 8-carbon sugar) for incorporation into bacterial lipopolysaccharide in Gram-negative bacteria. This Porphyromonas gingivalis (strain ATCC BAA-308 / W83) protein is 3-deoxy-manno-octulosonate cytidylyltransferase.